A 245-amino-acid polypeptide reads, in one-letter code: Uridylate kinase (245 aa).

Residue 20 to 23 (KLSG) coordinates ATP. Gly60 contacts UMP. 2 residues coordinate ATP: Gly61 and Arg65. UMP-binding positions include Asp80 and 141–148 (AGLPYFST). Residues Tyr175 and Asp178 each coordinate ATP.

Belongs to the UMP kinase family. In terms of assembly, homohexamer.

The protein resides in the cytoplasm. The catalysed reaction is UMP + ATP = UDP + ADP. It participates in pyrimidine metabolism; CTP biosynthesis via de novo pathway; UDP from UMP (UMPK route): step 1/1. With respect to regulation, inhibited by UTP. Catalyzes the reversible phosphorylation of UMP to UDP. This chain is Uridylate kinase, found in Arthrobacter sp. (strain FB24).